Here is a 127-residue protein sequence, read N- to C-terminus: Ribonuclease P protein component (127 aa).

Residues 99-127 are disordered; it reads ALSASLRQQLRDGIDRSARRQEPAAERQR. The span at 107–127 shows a compositional bias: basic and acidic residues; the sequence is QLRDGIDRSARRQEPAAERQR.

This sequence belongs to the RnpA family. As to quaternary structure, consists of a catalytic RNA component (M1 or rnpB) and a protein subunit.

The catalysed reaction is Endonucleolytic cleavage of RNA, removing 5'-extranucleotides from tRNA precursor.. Its function is as follows. RNaseP catalyzes the removal of the 5'-leader sequence from pre-tRNA to produce the mature 5'-terminus. It can also cleave other RNA substrates such as 4.5S RNA. The protein component plays an auxiliary but essential role in vivo by binding to the 5'-leader sequence and broadening the substrate specificity of the ribozyme. The polypeptide is Ribonuclease P protein component (Mycobacteroides abscessus (strain ATCC 19977 / DSM 44196 / CCUG 20993 / CIP 104536 / JCM 13569 / NCTC 13031 / TMC 1543 / L948) (Mycobacterium abscessus)).